Reading from the N-terminus, the 362-residue chain is Alanine racemase (362 aa).

Lys-35 (proton acceptor; specific for D-alanine) is an active-site residue. Position 35 is an N6-(pyridoxal phosphate)lysine (Lys-35). Residue Arg-130 coordinates substrate. Residue Tyr-257 is the Proton acceptor; specific for L-alanine of the active site. Met-305 is a substrate binding site.

Belongs to the alanine racemase family. Pyridoxal 5'-phosphate serves as cofactor.

The enzyme catalyses L-alanine = D-alanine. It functions in the pathway amino-acid biosynthesis; D-alanine biosynthesis; D-alanine from L-alanine: step 1/1. Functionally, catalyzes the interconversion of L-alanine and D-alanine. May also act on other amino acids. In Nitrosomonas europaea (strain ATCC 19718 / CIP 103999 / KCTC 2705 / NBRC 14298), this protein is Alanine racemase (alr).